Consider the following 549-residue polypeptide: Oxygen-dependent choline dehydrogenase (549 aa).

4–33 contributes to the FAD binding site; the sequence is DFVIIGSGSAGSAMAYRLSEDGRYSVIVIE. The Proton acceptor role is filled by histidine 465.

This sequence belongs to the GMC oxidoreductase family. Requires FAD as cofactor.

The catalysed reaction is choline + A = betaine aldehyde + AH2. The enzyme catalyses betaine aldehyde + NAD(+) + H2O = glycine betaine + NADH + 2 H(+). It participates in amine and polyamine biosynthesis; betaine biosynthesis via choline pathway; betaine aldehyde from choline (cytochrome c reductase route): step 1/1. In terms of biological role, involved in the biosynthesis of the osmoprotectant glycine betaine. Catalyzes the oxidation of choline to betaine aldehyde and betaine aldehyde to glycine betaine at the same rate. This Brucella canis (strain ATCC 23365 / NCTC 10854 / RM-666) protein is Oxygen-dependent choline dehydrogenase.